A 193-amino-acid chain; its full sequence is NADH-quinone oxidoreductase subunit B (193 aa).

The span at 1–11 (MGLTGTNTTLV) shows a compositional bias: polar residues. Residues 1-23 (MGLTGTNTTLVAPQPKGILDPRT) form a disordered region. 4 residues coordinate [4Fe-4S] cluster: C72, C73, C137, and C167.

The protein belongs to the complex I 20 kDa subunit family. As to quaternary structure, NDH-1 is composed of 14 different subunits. Subunits NuoB, C, D, E, F, and G constitute the peripheral sector of the complex. [4Fe-4S] cluster is required as a cofactor.

Its subcellular location is the cell inner membrane. It carries out the reaction a quinone + NADH + 5 H(+)(in) = a quinol + NAD(+) + 4 H(+)(out). In terms of biological role, NDH-1 shuttles electrons from NADH, via FMN and iron-sulfur (Fe-S) centers, to quinones in the respiratory chain. Couples the redox reaction to proton translocation (for every two electrons transferred, four hydrogen ions are translocated across the cytoplasmic membrane), and thus conserves the redox energy in a proton gradient. This is NADH-quinone oxidoreductase subunit B from Brucella canis (strain ATCC 23365 / NCTC 10854 / RM-666).